Here is a 630-residue protein sequence, read N- to C-terminus: MGINTSSAQSSGAASIARSSVNVKSGNRHLSSNKKSATSALEERASRPSILVTFLVLAGTILSLYIWPILSPDLFFANQRCSFKYKNKGSQRVVVEGKNGVVATEEETCSQIGVGILKAGGNAVDAAIASGICIGAVNSFSSGIGGGGFMLIRHPNGTAHSLNFRETAPAGASKNMFHGNSTLSQVGGLSVAVPGEIAGYERAWKMYGSLPWHKLFEPTIRLMRDGMPMPKELASRIRRPEFSYFKTHPDWSKIFAPEGVFLHVGEKFYRPALASTLEEIAKFGPEVFYTGKIAERLVKFVQQQGGILTMEDMANFSVVVEEPIYGNFYDREVITCGSPCSGEALILGLNVLSKVDLSEGTSILGCEMTDIGVHHLIETMKWMSAGRTVLADPTFYNNTDHVEQLLSLEYADEIRNNISNERTFDFTHYKAEYDFPNDHGTTHLSVIDKDNMAVGLTASINLMFGSQLLEPETGIILNDHMDDFASPGIVNAFGLSPSPYNFIAPGKRPQSSAVPTILVYNGEVEMVLGGSGGSRIVTAVLDTIIKKYKWGKSLLESVESPRFHHQLMPNIVYIDETVEIEVLRALEKFGHIVDLIPVQYPFSEIQAVFRTNGTLYGLSDSRKQAVAAAY.

The Cytoplasmic portion of the chain corresponds to 1-49 (MGINTSSAQSSGAASIARSSVNVKSGNRHLSSNKKSATSALEERASRPS). The helical; Signal-anchor for type II membrane protein transmembrane segment at 50–70 (ILVTFLVLAGTILSLYIWPIL) threads the bilayer. The Lumenal portion of the chain corresponds to 71-630 (SPDLFFANQR…SRKQAVAAAY (560 aa)). N-linked (GlcNAc...) asparagine glycosylation is present at Asn156. Position 165 (Arg165) interacts with L-glutamate. Asn180, Asn315, Asn397, and Asn417 each carry an N-linked (GlcNAc...) asparagine glycan. Thr441 (nucleophile) is an active-site residue. L-glutamate-binding positions include Ser459, Asn461, Asp483, 511–512 (SS), and 532–533 (GG). Asn612 carries an N-linked (GlcNAc...) asparagine glycan.

The protein belongs to the gamma-glutamyltransferase family. In terms of assembly, heterodimer composed of the light and heavy chains. The active site is located in the light chain. In terms of processing, cleaved by autocatalysis into a large and a small subunit.

It is found in the endoplasmic reticulum membrane. It catalyses the reaction an N-terminal (5-L-glutamyl)-[peptide] + an alpha-amino acid = 5-L-glutamyl amino acid + an N-terminal L-alpha-aminoacyl-[peptide]. The catalysed reaction is glutathione + H2O = L-cysteinylglycine + L-glutamate. It carries out the reaction an S-substituted glutathione + H2O = an S-substituted L-cysteinylglycine + L-glutamate. Its pathway is sulfur metabolism; glutathione metabolism. Catalyzes the transfer of the gamma-glutamyl moiety of glutathione (GSH) and other gamma-glutamyl compounds to amino acids and peptides. Major GSH-degrading enzyme, catalyzing the hydrolytic release of L-glutamate from GSH. The polypeptide is Glutathione hydrolase proenzyme 1 (ggt1) (Schizosaccharomyces pombe (strain 972 / ATCC 24843) (Fission yeast)).